Consider the following 323-residue polypeptide: GDP-L-fucose synthase 1 (323 aa).

At A2 the chain carries N-acetylalanine. Residue 23-29 (GHRGLVG) participates in NADP(+) binding. Y149 acts as the Proton donor/acceptor in catalysis. NADP(+) contacts are provided by residues K153, 176-179 (PTNL), and H192. The substrate site is built by R200, W215, R222, and D282.

It belongs to the NAD(P)-dependent epimerase/dehydratase family. Fucose synthase subfamily. In terms of assembly, binds and stabilizes MUR1. Homodimer. In terms of tissue distribution, highly expressed in roots and flowers, less abundant in leaves, stems and siliques.

It catalyses the reaction GDP-beta-L-fucose + NADP(+) = GDP-4-dehydro-alpha-D-rhamnose + NADPH + H(+). Its pathway is nucleotide-sugar biosynthesis; GDP-L-fucose biosynthesis via de novo pathway; GDP-L-fucose from GDP-alpha-D-mannose: step 2/2. Its function is as follows. Catalyzes the two-step NADP-dependent conversion of GDP-4-dehydro-6-deoxy-D-mannose to GDP-fucose, involving an epimerase and a reductase reaction. Not involved in the synthesis of GDP-L-galactose from GDP-D-mannose. The polypeptide is GDP-L-fucose synthase 1 (GER1) (Arabidopsis thaliana (Mouse-ear cress)).